Here is a 450-residue protein sequence, read N- to C-terminus: Phosphoglucosamine mutase (450 aa).

S103 acts as the Phosphoserine intermediate in catalysis. The Mg(2+) site is built by S103, D243, D245, and D247. S103 carries the post-translational modification Phosphoserine.

It belongs to the phosphohexose mutase family. The cofactor is Mg(2+). Activated by phosphorylation.

It carries out the reaction alpha-D-glucosamine 1-phosphate = D-glucosamine 6-phosphate. Catalyzes the conversion of glucosamine-6-phosphate to glucosamine-1-phosphate. The chain is Phosphoglucosamine mutase from Lactobacillus delbrueckii subsp. bulgaricus (strain ATCC 11842 / DSM 20081 / BCRC 10696 / JCM 1002 / NBRC 13953 / NCIMB 11778 / NCTC 12712 / WDCM 00102 / Lb 14).